Here is a 230-residue protein sequence, read N- to C-terminus: 5'-methylthioadenosine/S-adenosylhomocysteine nucleosidase (230 aa).

The Proton acceptor role is filled by E12. Substrate is bound by residues G78, I153, and 174 to 175 (ME). D198 acts as the Proton donor in catalysis.

Belongs to the PNP/UDP phosphorylase family. MtnN subfamily.

The enzyme catalyses S-adenosyl-L-homocysteine + H2O = S-(5-deoxy-D-ribos-5-yl)-L-homocysteine + adenine. It catalyses the reaction S-methyl-5'-thioadenosine + H2O = 5-(methylsulfanyl)-D-ribose + adenine. The catalysed reaction is 5'-deoxyadenosine + H2O = 5-deoxy-D-ribose + adenine. Its pathway is amino-acid biosynthesis; L-methionine biosynthesis via salvage pathway; S-methyl-5-thio-alpha-D-ribose 1-phosphate from S-methyl-5'-thioadenosine (hydrolase route): step 1/2. Catalyzes the irreversible cleavage of the glycosidic bond in both 5'-methylthioadenosine (MTA) and S-adenosylhomocysteine (SAH/AdoHcy) to adenine and the corresponding thioribose, 5'-methylthioribose and S-ribosylhomocysteine, respectively. Also cleaves 5'-deoxyadenosine, a toxic by-product of radical S-adenosylmethionine (SAM) enzymes, into 5-deoxyribose and adenine. This Shewanella pealeana (strain ATCC 700345 / ANG-SQ1) protein is 5'-methylthioadenosine/S-adenosylhomocysteine nucleosidase.